The following is a 771-amino-acid chain: Metal transporter CNNM4 (771 aa).

The Extracellular portion of the chain corresponds to 1–175 (MAPGGGGGRR…LLFMVEEHGR (175 aa)). N119 is a glycosylation site (N-linked (GlcNAc...) asparagine). The CNNM transmembrane domain maps to 175 to 355 (RFLPLWLHIL…EPYNDLVKEE (181 aa)). Residues 176 to 196 (FLPLWLHILLVMVLLVLSGIF) traverse the membrane as a helical segment. Over 197–237 (SGLNLGLMALDPMELRIVQNCGTEKERKYARKIEPIRRKGN) the chain is Cytoplasmic. Positions 238–258 (YLLCSLLLGNVLVNTSLTILL) form an intramembrane region, helical. Residues 259-261 (DNL) lie on the Cytoplasmic side of the membrane. A helical membrane pass occupies residues 262-282 (IGSGIMAVASSTIGIVIFGEI). The Extracellular segment spans residues 283-290 (LPQALCSR). The helical transmembrane segment at 291 to 313 (HGLAVGANTIVLTKVFMLLTFPL) threads the bilayer. Residues 314–771 (SFPISKLLDF…LHRASEEETI (458 aa)) lie on the Cytoplasmic side of the membrane. CBS domains are found at residues 374-435 (MTQL…CTPL) and 442-508 (YNHP…ILDE). Phosphoserine occurs at positions 657, 661, and 766.

It belongs to the ACDP family. In terms of assembly, interacts with COX11. As to expression, cornea, retina, teeth (at protein level). In the retina it is predominantly localized to the outer plexiform layer, inner plexiform layer and ganglion cell layer. In the tooth strongest expression is observed in the cell body of the ameloblasts. Expressed at high levels in the gastrointestinal tract and testis.

Its subcellular location is the cell membrane. Functionally, probable metal transporter. The interaction with the metal ion chaperone COX11 suggests that it may play a role in sensory neuron functions. May play a role in biomineralization and retinal function. In Mus musculus (Mouse), this protein is Metal transporter CNNM4 (Cnnm4).